The following is a 410-amino-acid chain: Ribosomal protein S6 kinase-related protein (410 aa).

The 168-residue stretch at Leu-107–Val-274 folds into the Protein kinase domain. Residues Val-113 to Val-121 and Lys-136 each bind ATP. Catalysis depends on Asp-229, which acts as the Proton acceptor.

This sequence belongs to the protein kinase superfamily. Ser/Thr protein kinase family.

It catalyses the reaction L-seryl-[protein] + ATP = O-phospho-L-seryl-[protein] + ADP + H(+). The enzyme catalyses L-threonyl-[protein] + ATP = O-phospho-L-threonyl-[protein] + ADP + H(+). The sequence is that of Ribosomal protein S6 kinase-related protein from Homo sapiens (Human).